Reading from the N-terminus, the 156-residue chain is 6,7-dimethyl-8-ribityllumazine synthase (156 aa).

5-amino-6-(D-ribitylamino)uracil is bound by residues F22, 57–59 (AYE), and 81–83 (TVI). A (2S)-2-hydroxy-3-oxobutyl phosphate-binding site is contributed by 86-87 (GT). H89 functions as the Proton donor in the catalytic mechanism. 5-amino-6-(D-ribitylamino)uracil is bound at residue F114. A (2S)-2-hydroxy-3-oxobutyl phosphate-binding site is contributed by R128.

The protein belongs to the DMRL synthase family. Forms an icosahedral capsid composed of 60 subunits, arranged as a dodecamer of pentamers.

The enzyme catalyses (2S)-2-hydroxy-3-oxobutyl phosphate + 5-amino-6-(D-ribitylamino)uracil = 6,7-dimethyl-8-(1-D-ribityl)lumazine + phosphate + 2 H2O + H(+). Its pathway is cofactor biosynthesis; riboflavin biosynthesis; riboflavin from 2-hydroxy-3-oxobutyl phosphate and 5-amino-6-(D-ribitylamino)uracil: step 1/2. Functionally, catalyzes the formation of 6,7-dimethyl-8-ribityllumazine by condensation of 5-amino-6-(D-ribitylamino)uracil with 3,4-dihydroxy-2-butanone 4-phosphate. This is the penultimate step in the biosynthesis of riboflavin. The chain is 6,7-dimethyl-8-ribityllumazine synthase from Salmonella heidelberg (strain SL476).